We begin with the raw amino-acid sequence, 401 residues long: Flagellin D (401 aa).

Belongs to the bacterial flagellin family.

The protein localises to the secreted. It is found in the bacterial flagellum. Its function is as follows. Flagellin is the subunit protein which polymerizes to form the filaments of bacterial flagella. The protein is Flagellin D (flaD) of Rhizobium meliloti (strain 1021) (Ensifer meliloti).